Here is a 302-residue protein sequence, read N- to C-terminus: Recombination-associated protein RdgC (302 aa).

Belongs to the RdgC family.

The protein localises to the cytoplasm. The protein resides in the nucleoid. May be involved in recombination. The polypeptide is Recombination-associated protein RdgC (Xylella fastidiosa (strain 9a5c)).